The sequence spans 218 residues: Ribose-5-phosphate isomerase A (218 aa).

Substrate-binding positions include 28-31, 81-84, and 94-97; these read TGST, DGAD, and KGGG. E103 functions as the Proton acceptor in the catalytic mechanism. K121 provides a ligand contact to substrate.

It belongs to the ribose 5-phosphate isomerase family. In terms of assembly, homodimer.

It carries out the reaction aldehydo-D-ribose 5-phosphate = D-ribulose 5-phosphate. It participates in carbohydrate degradation; pentose phosphate pathway; D-ribose 5-phosphate from D-ribulose 5-phosphate (non-oxidative stage): step 1/1. Its function is as follows. Catalyzes the reversible conversion of ribose-5-phosphate to ribulose 5-phosphate. The chain is Ribose-5-phosphate isomerase A from Alcanivorax borkumensis (strain ATCC 700651 / DSM 11573 / NCIMB 13689 / SK2).